A 177-amino-acid chain; its full sequence is Interleukin-19 (177 aa).

The N-terminal stretch at 1–24 is a signal peptide; it reads MKLQCVSLWLLGTILILCSVDNHG. 3 disulfides stabilise this stretch: C28/C121, C75/C127, and C76/C129. N56 carries N-linked (GlcNAc...) asparagine glycosylation. N-linked (GlcNAc...) asparagine glycosylation occurs at N135.

Belongs to the IL-10 family.

Its subcellular location is the secreted. Cytokine that functions as an anti-inflammatory and proangiogenic factor. Polarizes adaptive immunity to an anti-inflammatory phenotype through induction of T-helper 2 responses by both down-regulation of IFN-gamma and up-regulation of IL4 and IL13. Produced by osteocytes, stimulates granulopoiesis and neutrophil formation. Exerts its biological effect through a receptor complex consisting of a heterodimer of IL20RA and IL20RB. In turn, activates the Janus kinase (JAK) and signal transducer and activator of transcription (STAT) pathway, and importantly, STAT3. In Homo sapiens (Human), this protein is Interleukin-19 (IL19).